A 637-amino-acid chain; its full sequence is Phospholipase B (637 aa).

The signal sequence occupies residues 1-19; the sequence is MSIITTAFALSLLATTAFA. Residues 46–572 form the PLA2c domain; it reads DCPSNVTWIR…DTWCWAGDDN (527 aa). Residues asparagine 50, asparagine 56, asparagine 122, asparagine 231, asparagine 246, asparagine 272, asparagine 314, asparagine 343, asparagine 387, asparagine 433, asparagine 481, asparagine 501, asparagine 528, asparagine 553, asparagine 572, asparagine 594, and asparagine 606 are each glycosylated (N-linked (GlcNAc...) asparagine).

Belongs to the lysophospholipase family. Post-translationally, N-glycosylated.

The protein localises to the secreted. The enzyme catalyses a 1-acyl-sn-glycero-3-phosphocholine + H2O = sn-glycerol 3-phosphocholine + a fatty acid + H(+). Its function is as follows. Exhibits phospholipase B (PLB), lysophospholipase (LPL) and lysophospholipase/transacylase (LPTA) activities. This chain is Phospholipase B (PLB1), found in Cryptococcus neoformans var. neoformans serotype D (strain B-3501A) (Filobasidiella neoformans).